Reading from the N-terminus, the 139-residue chain is Large ribosomal subunit protein uL16 (139 aa).

Residues 1–11 (MLQPKRTKYRK) are compositionally biased toward basic residues. The segment at 1–30 (MLQPKRTKYRKPFLQSHDKRKAHKGNKVSF) is disordered.

This sequence belongs to the universal ribosomal protein uL16 family. Part of the 50S ribosomal subunit.

Binds 23S rRNA and is also seen to make contacts with the A and possibly P site tRNAs. The polypeptide is Large ribosomal subunit protein uL16 (Mycoplasmopsis synoviae (strain 53) (Mycoplasma synoviae)).